The sequence spans 125 residues: Fluoride-specific ion channel FluC (125 aa).

The next 4 helical transmembrane spans lie at 6–26, 34–54, 68–88, and 98–118; these read GFIALAGAAGTLARYWLSGLV, FPWGTAVVNILGCFLFGLVWE, AVLLTGFMGAFTTFSTFIFES, and LALLANLGFQTILGFAALFAG. Na(+) is bound by residues Gly-76 and Thr-79.

Belongs to the fluoride channel Fluc/FEX (TC 1.A.43) family.

The protein localises to the cell inner membrane. It catalyses the reaction fluoride(in) = fluoride(out). Na(+) is not transported, but it plays an essential structural role and its presence is essential for fluoride channel function. In terms of biological role, fluoride-specific ion channel. Important for reducing fluoride concentration in the cell, thus reducing its toxicity. The protein is Fluoride-specific ion channel FluC of Solidesulfovibrio magneticus (strain ATCC 700980 / DSM 13731 / RS-1) (Desulfovibrio magneticus).